We begin with the raw amino-acid sequence, 181 residues long: ADP-ribosylation factor 1 (181 aa).

A lipid anchor (N-myristoyl glycine) is attached at Gly-2. GTP is bound by residues Gly-24–Thr-31, Asn-126–Asp-129, and Ala-160.

Belongs to the small GTPase superfamily. Arf family. In terms of assembly, may interact with GTPase RAB5b.

It localises to the golgi apparatus membrane. It catalyses the reaction GTP + H2O = GDP + phosphate + H(+). Its activity is regulated as follows. Alternates between an inactive GDP-bound form and an active GTP-bound form. Intrinsic GTPase activity is almost undetectable in vitro. Activated by a guanine nucleotide-exchange factor (GEF) and inactivated by GTPase-activating protein ARFGAP1. In terms of biological role, small GTPase involved in protein trafficking between different compartments. Modulates vesicle budding and uncoating within the Golgi complex. In its GTP-bound form, triggers the recruitment of coatomer proteins to the Golgi membrane. The hydrolysis of ARF1-bound GTP, which is mediated by ARFGAPs proteins, is required for dissociation of coat proteins from Golgi membranes and vesicles. Regulates the transport of N-acylated AK2 to the parasitophorous vacuole membrane. May be involved in the activation of lipid kinase PIP5K. The protein is ADP-ribosylation factor 1 (ARF1) of Plasmodium falciparum (isolate NF54).